The chain runs to 670 residues: UvrABC system protein B (670 aa).

Residues 26–183 (EGLEDGLAHQ…RRLAELQYAR (158 aa)) form the Helicase ATP-binding domain. 39–46 (GVTGSGKT) lines the ATP pocket. The short motif at 92-115 (YYDYYQPEAYVPSSDTFIEKDAAV) is the Beta-hairpin element. The 167-residue stretch at 431–597 (QVDDLLSEIR…GLNKKVSDVL (167 aa)) folds into the Helicase C-terminal domain. Positions 630–665 (DQKIRELEAQMYTHAQNLEFELAAGLRDEIHQLREQ) constitute a UVR domain.

Belongs to the UvrB family. Forms a heterotetramer with UvrA during the search for lesions. Interacts with UvrC in an incision complex.

It localises to the cytoplasm. The UvrABC repair system catalyzes the recognition and processing of DNA lesions. A damage recognition complex composed of 2 UvrA and 2 UvrB subunits scans DNA for abnormalities. Upon binding of the UvrA(2)B(2) complex to a putative damaged site, the DNA wraps around one UvrB monomer. DNA wrap is dependent on ATP binding by UvrB and probably causes local melting of the DNA helix, facilitating insertion of UvrB beta-hairpin between the DNA strands. Then UvrB probes one DNA strand for the presence of a lesion. If a lesion is found the UvrA subunits dissociate and the UvrB-DNA preincision complex is formed. This complex is subsequently bound by UvrC and the second UvrB is released. If no lesion is found, the DNA wraps around the other UvrB subunit that will check the other stand for damage. The sequence is that of UvrABC system protein B from Serratia proteamaculans (strain 568).